Here is an 88-residue protein sequence, read N- to C-terminus: Small ribosomal subunit protein uS15 (88 aa).

It belongs to the universal ribosomal protein uS15 family. As to quaternary structure, part of the 30S ribosomal subunit. Forms a bridge to the 50S subunit in the 70S ribosome, contacting the 23S rRNA.

Functionally, one of the primary rRNA binding proteins, it binds directly to 16S rRNA where it helps nucleate assembly of the platform of the 30S subunit by binding and bridging several RNA helices of the 16S rRNA. In terms of biological role, forms an intersubunit bridge (bridge B4) with the 23S rRNA of the 50S subunit in the ribosome. The polypeptide is Small ribosomal subunit protein uS15 (Caldanaerobacter subterraneus subsp. tengcongensis (strain DSM 15242 / JCM 11007 / NBRC 100824 / MB4) (Thermoanaerobacter tengcongensis)).